Consider the following 77-residue polypeptide: Translation initiation factor IF-1, chloroplastic (77 aa).

The 71-residue stretch at 1–71 (MKEQKWIHEG…TRGRIIYRLR (71 aa)) folds into the S1-like domain.

The protein belongs to the IF-1 family. As to quaternary structure, component of the 30S ribosomal translation pre-initiation complex which assembles on the 30S ribosome in the order IF-2 and IF-3, IF-1 and N-formylmethionyl-tRNA(fMet); mRNA recruitment can occur at any time during PIC assembly.

The protein localises to the plastid. It is found in the chloroplast. One of the essential components for the initiation of protein synthesis. Stabilizes the binding of IF-2 and IF-3 on the 30S subunit to which N-formylmethionyl-tRNA(fMet) subsequently binds. Helps modulate mRNA selection, yielding the 30S pre-initiation complex (PIC). Upon addition of the 50S ribosomal subunit IF-1, IF-2 and IF-3 are released leaving the mature 70S translation initiation complex. The sequence is that of Translation initiation factor IF-1, chloroplastic from Nandina domestica (Heavenly bamboo).